The sequence spans 293 residues: Putative serine protease 42 (293 aa).

An N-terminal signal peptide occupies residues 1–26 (MSSGGGSRGLLAWLLLLQPWPGQNWA). The tract at residues 33–60 (LPSPLLSEEGGENPEASPAPGPEAGPPL) is disordered. The region spanning 80–293 (IVGGVDAEEG…IVSWGIGCGR (214 aa)) is the Peptidase S1 domain. An intrachain disulfide couples Cys-105 to Cys-121. Catalysis depends on His-120, which acts as the Charge relay system. Residue Asn-141 is glycosylated (N-linked (GlcNAc...) asparagine). Residue Asp-166 is the Charge relay system of the active site. N-linked (GlcNAc...) asparagine glycosylation occurs at Asn-177. 3 disulfides stabilise this stretch: Cys-200–Cys-273, Cys-232–Cys-253, and Cys-263–Cys-291. Catalysis depends on Ser-267, which acts as the Charge relay system. A glycan (N-linked (GlcNAc...) asparagine) is linked at Asn-276.

Belongs to the peptidase S1 family.

It is found in the cytoplasm. The protein resides in the cell membrane. Its function is as follows. Plays a role in spermatogenesis. Involved in germ cell survival during meiosis. This chain is Putative serine protease 42, found in Homo sapiens (Human).